Reading from the N-terminus, the 361-residue chain is uncharacterized protein (361 aa).

33-40 (GPINSGKT) contributes to the ATP binding site.

It belongs to the archaeal ATPase family.

This is an uncharacterized protein from Methanocaldococcus jannaschii (strain ATCC 43067 / DSM 2661 / JAL-1 / JCM 10045 / NBRC 100440) (Methanococcus jannaschii).